The primary structure comprises 107 residues: Homeobox protein HD-7 (107 aa).

A DNA-binding region (homeobox) is located at residues 21-80 (KPGEKVRKSEFQKEVLKKVYQATPYPTWENKIDIGILISLSPRAVDIWFQNKRHINKGKN).

It localises to the nucleus. The sequence is that of Homeobox protein HD-7 (HD-7) from Encephalitozoon cuniculi (strain GB-M1) (Microsporidian parasite).